A 312-amino-acid polypeptide reads, in one-letter code: Phospho-N-acetylmuramoyl-pentapeptide-transferase (312 aa).

The next 9 membrane-spanning stretches (helical) occupy residues 1–21 (MMVV…HYSK), 48–68 (GVAF…FGGI), 76–96 (EVMI…DDFL), 115–135 (FPLQ…LASH), 140–160 (GFMS…FVMV), 165–185 (AFNF…IVLL), 214–234 (VFMG…AYAL), 238–258 (VWLL…VVIQ), and 289–309 (VTLR…WLMG).

Belongs to the glycosyltransferase 4 family. MraY subfamily. Mg(2+) serves as cofactor.

The protein resides in the cell membrane. It carries out the reaction UDP-N-acetyl-alpha-D-muramoyl-L-alanyl-gamma-D-glutamyl-meso-2,6-diaminopimeloyl-D-alanyl-D-alanine + di-trans,octa-cis-undecaprenyl phosphate = di-trans,octa-cis-undecaprenyl diphospho-N-acetyl-alpha-D-muramoyl-L-alanyl-D-glutamyl-meso-2,6-diaminopimeloyl-D-alanyl-D-alanine + UMP. The protein operates within cell wall biogenesis; peptidoglycan biosynthesis. Its function is as follows. Catalyzes the initial step of the lipid cycle reactions in the biosynthesis of the cell wall peptidoglycan: transfers peptidoglycan precursor phospho-MurNAc-pentapeptide from UDP-MurNAc-pentapeptide onto the lipid carrier undecaprenyl phosphate, yielding undecaprenyl-pyrophosphoryl-MurNAc-pentapeptide, known as lipid I. This chain is Phospho-N-acetylmuramoyl-pentapeptide-transferase, found in Deinococcus radiodurans (strain ATCC 13939 / DSM 20539 / JCM 16871 / CCUG 27074 / LMG 4051 / NBRC 15346 / NCIMB 9279 / VKM B-1422 / R1).